Here is a 699-residue protein sequence, read N- to C-terminus: Pollen-specific leucine-rich repeat extensin-like protein 4 (699 aa).

The N-terminal stretch at 1–39 (MPFYKQPWVFSKVFVLAMAKPPSFGCCFFLLFFSFLSSS) is a signal peptide. N106 carries N-linked (GlcNAc...) asparagine glycosylation. 9 LRR repeats span residues 133–157 (VTVV…LGLM), 158–180 (TDVA…SFEK), 182–205 (KLMH…VLSW), 206–229 (PDVK…LFKK), 231–251 (LDAI…SLGE), 253–275 (PASV…IGNM), 276–299 (KNLN…IGKL), 301–323 (NVTV…FVGL), and 324–347 (TSVE…ICQL). A glycan (N-linked (GlcNAc...) asparagine) is linked at N301. The N-linked (GlcNAc...) asparagine glycan is linked to N352. A disordered region spans residues 411–699 (KCAGGSSTPS…SPPPPMFAGY (289 aa)). 4 stretches are compositionally biased toward pro residues: residues 421–466 (KPSP…PVPT), 482–504 (KPSP…PQPD), 518–659 (PPPA…PPAP), and 690–699 (SPPPPMFAGY). Residues 517–699 (SPPPAPVNSP…SPPPPMFAGY (183 aa)) form a contains the Ser-Pro(4) repeats region.

Post-translationally, hydroxylated on proline residues in the S-P-P-P-P repeat. O-glycosylated on hydroxyprolines. In terms of tissue distribution, expressed in flowers, stamen, pollen, and pollinated carpels.

The protein resides in the secreted. It is found in the cell wall. Its function is as follows. Modulates cell morphogenesis by regulating cell wall formation and assembly, and/or growth polarization. The chain is Pollen-specific leucine-rich repeat extensin-like protein 4 (PEX4) from Arabidopsis thaliana (Mouse-ear cress).